Reading from the N-terminus, the 365-residue chain is Peptide chain release factor 2 (365 aa).

An N5-methylglutamine modification is found at Gln-252.

The protein belongs to the prokaryotic/mitochondrial release factor family. Post-translationally, methylated by PrmC. Methylation increases the termination efficiency of RF2.

It is found in the cytoplasm. Peptide chain release factor 2 directs the termination of translation in response to the peptide chain termination codons UGA and UAA. This is Peptide chain release factor 2 from Klebsiella pneumoniae (strain 342).